Consider the following 212-residue polypeptide: MFNSSSLNVYFICGTQDVPEGKDIREILKQALEAGITLFQFREKGPTSLDGVEKEHLAIDLLKLCHDYQVPFIVNDDVDLAEKINADGIHVGQDDENVKSFAERFKDKIIGLSIGNEKEYYHSDLEHVDYIGVGPMFATISKNDANAPVGPSMIATLKNINPSLPMVAIGGITEDNIEPIAQNGADGVSVISAIARSHNIDKTVTKMKSYFK.

4-amino-2-methyl-5-(diphosphooxymethyl)pyrimidine-binding positions include 40-44 (QFREK) and Asn75. Residues Asp76 and Asp95 each coordinate Mg(2+). Residue Ser113 participates in 4-amino-2-methyl-5-(diphosphooxymethyl)pyrimidine binding. 139–141 (TIS) is a binding site for 2-[(2R,5Z)-2-carboxy-4-methylthiazol-5(2H)-ylidene]ethyl phosphate. A 4-amino-2-methyl-5-(diphosphooxymethyl)pyrimidine-binding site is contributed by Lys142. 2-[(2R,5Z)-2-carboxy-4-methylthiazol-5(2H)-ylidene]ethyl phosphate contacts are provided by residues Gly171 and 191–192 (IS).

Belongs to the thiamine-phosphate synthase family. It depends on Mg(2+) as a cofactor.

It carries out the reaction 2-[(2R,5Z)-2-carboxy-4-methylthiazol-5(2H)-ylidene]ethyl phosphate + 4-amino-2-methyl-5-(diphosphooxymethyl)pyrimidine + 2 H(+) = thiamine phosphate + CO2 + diphosphate. The enzyme catalyses 2-(2-carboxy-4-methylthiazol-5-yl)ethyl phosphate + 4-amino-2-methyl-5-(diphosphooxymethyl)pyrimidine + 2 H(+) = thiamine phosphate + CO2 + diphosphate. The catalysed reaction is 4-methyl-5-(2-phosphooxyethyl)-thiazole + 4-amino-2-methyl-5-(diphosphooxymethyl)pyrimidine + H(+) = thiamine phosphate + diphosphate. It participates in cofactor biosynthesis; thiamine diphosphate biosynthesis; thiamine phosphate from 4-amino-2-methyl-5-diphosphomethylpyrimidine and 4-methyl-5-(2-phosphoethyl)-thiazole: step 1/1. Functionally, condenses 4-methyl-5-(beta-hydroxyethyl)thiazole monophosphate (THZ-P) and 2-methyl-4-amino-5-hydroxymethyl pyrimidine pyrophosphate (HMP-PP) to form thiamine monophosphate (TMP). In Staphylococcus haemolyticus (strain JCSC1435), this protein is Thiamine-phosphate synthase.